The following is a 718-amino-acid chain: Probable trehalose-phosphatase (718 aa).

The disordered stretch occupies residues 449–470 (LSMDQTGHKKVDAKKKPGIRKK). Basic residues predominate over residues 459–470 (VDAKKKPGIRKK).

The protein in the N-terminal section; belongs to the glycosyltransferase 20 family. This sequence in the C-terminal section; belongs to the trehalose phosphatase family.

The catalysed reaction is alpha,alpha-trehalose 6-phosphate + H2O = alpha,alpha-trehalose + phosphate. The protein is Probable trehalose-phosphatase of Encephalitozoon cuniculi (strain GB-M1) (Microsporidian parasite).